The chain runs to 108 residues: uncharacterized protein (108 aa).

This is an uncharacterized protein from Enterobacteria phage T4 (Bacteriophage T4).